The sequence spans 89 residues: Small ribosomal subunit protein bS16 (89 aa).

It belongs to the bacterial ribosomal protein bS16 family.

This Desulforamulus reducens (strain ATCC BAA-1160 / DSM 100696 / MI-1) (Desulfotomaculum reducens) protein is Small ribosomal subunit protein bS16.